Reading from the N-terminus, the 162-residue chain is MLQKKKYQKKSSKIIINKKAYYNYFIEKVFQSGLVLEGWEIKSIRSGKVNISESYIINDRNEMYLCNCLIEPLQMSSNRFSCDPTRKKKLLLHKNEIDFLSLKKKNTGYTMVSLSLFWKKSWCKLEFGLAKGKTAQDKRINLKKREWEQEKLKILKKTKETY.

Belongs to the SmpB family.

The protein resides in the cytoplasm. Required for rescue of stalled ribosomes mediated by trans-translation. Binds to transfer-messenger RNA (tmRNA), required for stable association of tmRNA with ribosomes. tmRNA and SmpB together mimic tRNA shape, replacing the anticodon stem-loop with SmpB. tmRNA is encoded by the ssrA gene; the 2 termini fold to resemble tRNA(Ala) and it encodes a 'tag peptide', a short internal open reading frame. During trans-translation Ala-aminoacylated tmRNA acts like a tRNA, entering the A-site of stalled ribosomes, displacing the stalled mRNA. The ribosome then switches to translate the ORF on the tmRNA; the nascent peptide is terminated with the 'tag peptide' encoded by the tmRNA and targeted for degradation. The ribosome is freed to recommence translation, which seems to be the essential function of trans-translation. The sequence is that of SsrA-binding protein from Buchnera aphidicola subsp. Acyrthosiphon pisum (strain 5A).